A 219-amino-acid chain; its full sequence is Triosephosphate isomerase (219 aa).

A substrate-binding site is contributed by N6 to K8. H90 serves as the catalytic Electrophile. Catalysis depends on E138, which acts as the Proton acceptor. Residues I143, G178, and A199–S200 each bind substrate.

Belongs to the triosephosphate isomerase family. As to quaternary structure, homotetramer; dimer of dimers.

Its subcellular location is the cytoplasm. The enzyme catalyses D-glyceraldehyde 3-phosphate = dihydroxyacetone phosphate. The protein operates within carbohydrate biosynthesis; gluconeogenesis. Its pathway is carbohydrate degradation; glycolysis; D-glyceraldehyde 3-phosphate from glycerone phosphate: step 1/1. In terms of biological role, involved in the gluconeogenesis. Catalyzes stereospecifically the conversion of dihydroxyacetone phosphate (DHAP) to D-glyceraldehyde-3-phosphate (G3P). The chain is Triosephosphate isomerase from Methanocaldococcus jannaschii (strain ATCC 43067 / DSM 2661 / JAL-1 / JCM 10045 / NBRC 100440) (Methanococcus jannaschii).